The sequence spans 215 residues: Ribonuclease T (215 aa).

Residues 20 to 194 (VVIDVETAGF…YDTERTAVLF (175 aa)) form the Exonuclease domain. Positions 23, 25, 181, and 186 each coordinate Mg(2+). The Proton donor/acceptor role is filled by H181.

It belongs to the RNase T family. In terms of assembly, homodimer. The cofactor is Mg(2+).

In terms of biological role, trims short 3' overhangs of a variety of RNA species, leaving a one or two nucleotide 3' overhang. Responsible for the end-turnover of tRNA: specifically removes the terminal AMP residue from uncharged tRNA (tRNA-C-C-A). Also appears to be involved in tRNA biosynthesis. This chain is Ribonuclease T, found in Shigella boydii serotype 4 (strain Sb227).